Here is an 810-residue protein sequence, read N- to C-terminus: Glycerol-3-phosphate acyltransferase (810 aa).

The HXXXXD motif motif lies at 305-310 (CHRSHI).

Belongs to the GPAT/DAPAT family.

The protein resides in the cell inner membrane. It catalyses the reaction sn-glycerol 3-phosphate + an acyl-CoA = a 1-acyl-sn-glycero-3-phosphate + CoA. It participates in phospholipid metabolism; CDP-diacylglycerol biosynthesis; CDP-diacylglycerol from sn-glycerol 3-phosphate: step 1/3. In Haemophilus influenzae (strain PittEE), this protein is Glycerol-3-phosphate acyltransferase.